A 515-amino-acid chain; its full sequence is 1-pyrroline-5-carboxylate dehydrogenase (515 aa).

Residues glutamate 286 and cysteine 320 contribute to the active site.

This sequence belongs to the aldehyde dehydrogenase family. RocA subfamily.

It catalyses the reaction L-glutamate 5-semialdehyde + NAD(+) + H2O = L-glutamate + NADH + 2 H(+). Its pathway is amino-acid degradation; L-proline degradation into L-glutamate; L-glutamate from L-proline: step 2/2. The polypeptide is 1-pyrroline-5-carboxylate dehydrogenase (Geobacillus sp. (strain WCH70)).